We begin with the raw amino-acid sequence, 512 residues long: Protein disulfide-isomerase (512 aa).

The first 24 residues, 1–24, serve as a signal peptide directing secretion; the sequence is MAKNVAIFGLLFSLLLLVPSQIFA. In terms of domain architecture, Thioredoxin 1 spans 25–144; it reads EESSTDAKEF…IVEYLKKQSG (120 aa). Active-site nucleophile residues include C62 and C65. A disulfide bridge connects residues C62 and C65. A glycan (N-linked (GlcNAc...) asparagine) is linked at N278. A Thioredoxin 2 domain is found at 357–485; the sequence is YKDGKVEPFV…IIEFIEKNKD (129 aa). Catalysis depends on nucleophile residues C407 and C410. Cysteines 407 and 410 form a disulfide. The segment covering 487–496 has biased composition (basic and acidic residues); the sequence is TGAAHQEVEQ. Residues 487–512 are disordered; the sequence is TGAAHQEVEQPKAAAQPEAEQPKDEL. The Prevents secretion from ER signature appears at 509–512; it reads KDEL.

The protein belongs to the protein disulfide isomerase family.

The protein localises to the endoplasmic reticulum lumen. The enzyme catalyses Catalyzes the rearrangement of -S-S- bonds in proteins.. Functionally, participates in the folding of proteins containing disulfide bonds, may be involved in glycosylation, prolyl hydroxylation and triglyceride transfer. This is Protein disulfide-isomerase (PDI) from Medicago sativa (Alfalfa).